Consider the following 288-residue polypeptide: Ribosomal protein L11 methyltransferase (288 aa).

Residues threonine 141, glycine 164, aspartate 186, and asparagine 227 each coordinate S-adenosyl-L-methionine.

The protein belongs to the methyltransferase superfamily. PrmA family.

Its subcellular location is the cytoplasm. It carries out the reaction L-lysyl-[protein] + 3 S-adenosyl-L-methionine = N(6),N(6),N(6)-trimethyl-L-lysyl-[protein] + 3 S-adenosyl-L-homocysteine + 3 H(+). Methylates ribosomal protein L11. The polypeptide is Ribosomal protein L11 methyltransferase (Myxococcus xanthus (strain DK1622)).